The chain runs to 345 residues: Phosphoribosylformylglycinamidine cyclo-ligase (345 aa).

It belongs to the AIR synthase family.

The protein localises to the cytoplasm. The catalysed reaction is 2-formamido-N(1)-(5-O-phospho-beta-D-ribosyl)acetamidine + ATP = 5-amino-1-(5-phospho-beta-D-ribosyl)imidazole + ADP + phosphate + H(+). It functions in the pathway purine metabolism; IMP biosynthesis via de novo pathway; 5-amino-1-(5-phospho-D-ribosyl)imidazole from N(2)-formyl-N(1)-(5-phospho-D-ribosyl)glycinamide: step 2/2. The sequence is that of Phosphoribosylformylglycinamidine cyclo-ligase from Anaeromyxobacter dehalogenans (strain 2CP-1 / ATCC BAA-258).